Here is a 255-residue protein sequence, read N- to C-terminus: 5-oxoprolinase subunit A (255 aa).

Belongs to the LamB/PxpA family. As to quaternary structure, forms a complex composed of PxpA, PxpB and PxpC.

The enzyme catalyses 5-oxo-L-proline + ATP + 2 H2O = L-glutamate + ADP + phosphate + H(+). Functionally, catalyzes the cleavage of 5-oxoproline to form L-glutamate coupled to the hydrolysis of ATP to ADP and inorganic phosphate. The chain is 5-oxoprolinase subunit A from Thermococcus onnurineus (strain NA1).